The sequence spans 65 residues: Translational regulator CsrA (65 aa).

It belongs to the CsrA/RsmA family. In terms of assembly, homodimer; the beta-strands of each monomer intercalate to form a hydrophobic core, while the alpha-helices form wings that extend away from the core.

The protein resides in the cytoplasm. A key translational regulator that binds mRNA to regulate translation initiation and/or mRNA stability. Mediates global changes in gene expression, shifting from rapid growth to stress survival by linking envelope stress, the stringent response and the catabolite repression systems. Usually binds in the 5'-UTR; binding at or near the Shine-Dalgarno sequence prevents ribosome-binding, repressing translation, binding elsewhere in the 5'-UTR can activate translation and/or stabilize the mRNA. Its function is antagonized by small RNA(s). The chain is Translational regulator CsrA from Pseudomonas putida (strain ATCC 47054 / DSM 6125 / CFBP 8728 / NCIMB 11950 / KT2440).